The sequence spans 728 residues: Phosphoribosylformylglycinamidine synthase subunit PurL (728 aa).

H54 is a catalytic residue. ATP contacts are provided by Y57 and K96. Position 98 (E98) interacts with Mg(2+). Residues 99–102 and R121 contribute to the substrate site; that span reads SHNH. The Proton acceptor role is filled by H100. Position 122 (D122) interacts with Mg(2+). Q245 provides a ligand contact to substrate. D273 is a Mg(2+) binding site. Substrate is bound at residue 317-319; that stretch reads ETQ. ATP is bound by residues D495 and G532. N533 is a Mg(2+) binding site. Residue S535 coordinates substrate.

The protein belongs to the FGAMS family. In terms of assembly, monomer. Part of the FGAM synthase complex composed of 1 PurL, 1 PurQ and 2 PurS subunits.

Its subcellular location is the cytoplasm. The catalysed reaction is N(2)-formyl-N(1)-(5-phospho-beta-D-ribosyl)glycinamide + L-glutamine + ATP + H2O = 2-formamido-N(1)-(5-O-phospho-beta-D-ribosyl)acetamidine + L-glutamate + ADP + phosphate + H(+). The protein operates within purine metabolism; IMP biosynthesis via de novo pathway; 5-amino-1-(5-phospho-D-ribosyl)imidazole from N(2)-formyl-N(1)-(5-phospho-D-ribosyl)glycinamide: step 1/2. In terms of biological role, part of the phosphoribosylformylglycinamidine synthase complex involved in the purines biosynthetic pathway. Catalyzes the ATP-dependent conversion of formylglycinamide ribonucleotide (FGAR) and glutamine to yield formylglycinamidine ribonucleotide (FGAM) and glutamate. The FGAM synthase complex is composed of three subunits. PurQ produces an ammonia molecule by converting glutamine to glutamate. PurL transfers the ammonia molecule to FGAR to form FGAM in an ATP-dependent manner. PurS interacts with PurQ and PurL and is thought to assist in the transfer of the ammonia molecule from PurQ to PurL. The sequence is that of Phosphoribosylformylglycinamidine synthase subunit PurL from Macrococcus caseolyticus (strain JCSC5402) (Macrococcoides caseolyticum).